The primary structure comprises 739 residues: MSINEEDYLQLEKEIKLDDIDFSDLEEKYEVNIGLDNYIIVDGAPIAPEAKVPVLIKVLRKLFSQVGEIVEGDEGIYMPLENGKSKGYLFIQFKSTESADLAIKKLHGKKLDQNHRLLVNKLSDMEKYGVDGAVNEEFIEPEIEPFQSHGYLKSWLQDEQGRDQMVLHFSETVGVYWNKKSADPEPVIEPRKGFTSKYAKFSPKGTYLFSIHPQGIQSWGGANFNSIKRFFHQQVRLVDFSPNEKFMVTLSPIPISLPDSTVDRAQFPFGPESEGHKLVIWNMITGEPVRTFALPPHLEGQKEMPWPLVKWSYDDKYCARQGPDALAIYETESNFQLLDKKLVKVDGIQDFEWAPAGVKLHNSKAVDGKHVLSYWTPESTNQTARVALMQIPSREILRTVNLFQVSDCKMHWQSNGKLLCVKVDRHTKSGKTIFSNLEFFKTNERDIPVEKLELKDVVVNFAWEPNTERFITISRLDDGNPNPAIPKNTISFYAPEVTKGGVNHNSKKKGGAAIAAAVAAAAINNQSSTKYKAYTKIENKHSNTIFWSPKGRYVVVATISRTSGELEFFDVSFDDETNKKSLPANVKLLKTDKFSGMTNISWDPSGRFVAAWSTSWLHAIENGYRLYEFTGNLLRDDSIDQFKDFVWRPRPPSLLTNSDKKKVRSNLREYSAQFEEADAMEADAAVKEIILARRKALEEWRKYRAKHISKQGNSKNEVQAEIIEEIKEEIIEEKEEIVE.

The segment at 1–98 (MSINEEDYLQ…LFIQFKSTES (98 aa)) is sufficient for interaction with HCR1 and TIF32. A sufficient for interaction with PIC8 region spans residues 1 to 224 (MSINEEDYLQ…GIQSWGGANF (224 aa)). An RRM domain is found at 37–124 (NYIIVDGAPI…HRLLVNKLSD (88 aa)). 7 WD repeats span residues 190 to 229 (PRKGFTSKYAKFSPKGTYLFSIHPQGIQSWGGANFNSIKR), 231 to 293 (FHQQ…RTFA), 301 to 339 (QKEMPWPLVKWSYDDKYCARQGPDALAIYETESNFQLLD), 343 to 385 (VKVD…QTAR), 453 to 502 (ELKD…KGGV), 537 to 579 (IENK…ETNK), and 592 to 630 (DKFSGMTNISWDPSGRFVAAWSTSWLHAIENGYRLYEFT).

It belongs to the eIF-3 subunit B family. As to quaternary structure, component of the eukaryotic translation initiation factor 3 (eIF-3) complex.

Its subcellular location is the cytoplasm. Its function is as follows. RNA-binding component of the eukaryotic translation initiation factor 3 (eIF-3) complex, which is involved in protein synthesis of a specialized repertoire of mRNAs and, together with other initiation factors, stimulates binding of mRNA and methionyl-tRNAi to the 40S ribosome. The eIF-3 complex specifically targets and initiates translation of a subset of mRNAs involved in cell proliferation. The protein is Eukaryotic translation initiation factor 3 subunit B of Candida albicans (strain SC5314 / ATCC MYA-2876) (Yeast).